Consider the following 1049-residue polypeptide: Vacuolar membrane protease (1049 aa).

Residues 1–11 (MKCYNPSAFVP) are Cytoplasmic-facing. A helical transmembrane segment spans residues 12 to 32 (MAVTLVTVIIYLGVFIPLLII). The Vacuolar segment spans residues 33–438 (QETVPSAPDD…TVFAVFKLRT (406 aa)). N50 carries N-linked (GlcNAc...) asparagine glycosylation. Positions 114 to 135 (DAEAPESVPSPSNSNDGSAERY) are disordered. Residue N157 is glycosylated (N-linked (GlcNAc...) asparagine). The Zn(2+) site is built by H221 and D233. E267 functions as the Proton acceptor in the catalytic mechanism. E268, E293, and H365 together coordinate Zn(2+). A helical membrane pass occupies residues 439–459 (LFAWSLTLLIAAPLMLFAVSY). The Cytoplasmic portion of the chain corresponds to 460 to 495 (LLNRQDKFYFFAGSIKAKGPEDEPISLGGWRGAFRY). A helical transmembrane segment spans residues 496–516 (PITLIITCAITFGCASLINKI). Topologically, residues 517–526 (NPMIVYSSPY) are vacuolar. A helical membrane pass occupies residues 527–547 (SVWSMSASLFFSIFWFIMAGC). The Cytoplasmic portion of the chain corresponds to 548–557 (NFVRPSALQR). Residues 558–578 (GYAFMWLFVFGWIILVAATVY) traverse the membrane as a helical segment. Residues 579–585 (EDRFKIS) are Vacuolar-facing. A helical transmembrane segment spans residues 586–606 (GGYLFVFYEAAIFLATLIAIG). At 607–740 (EQFALPKKST…LPIWTWLVQY (134 aa)) the chain is on the cytoplasmic side. The interval 621-686 (SQLDHDGNQD…IGGGAPTQRS (66 aa)) is disordered. Residues 622 to 633 (QLDHDGNQDSHH) are compositionally biased toward basic and acidic residues. Acidic residues predominate over residues 655 to 664 (GQEEDPEDNV). Residues 741–761 (LLVGPFILIVVGQVGLFLVAA) traverse the membrane as a helical segment. Residues 762–773 (LHQTGTDGSPLL) lie on the Vacuolar side of the membrane. Residues 774–794 (LPYLVVAVFSILLLLPVTPFI) form a helical membrane-spanning segment. The Cytoplasmic portion of the chain corresponds to 795–801 (HRLTHHM). The chain crosses the membrane as a helical span at residues 802-822 (PTFFFLVFIGTLIYNLVAFPF). Residues 823–1049 (SPNNRYKAYF…LVEGSKRFVV (227 aa)) lie on the Vacuolar side of the membrane. N914 carries N-linked (GlcNAc...) asparagine glycosylation.

The protein belongs to the peptidase M28 family. Zn(2+) is required as a cofactor.

It localises to the vacuole membrane. Its function is as follows. May be involved in vacuolar sorting and osmoregulation. This chain is Vacuolar membrane protease, found in Botryotinia fuckeliana (strain B05.10) (Noble rot fungus).